A 707-amino-acid polypeptide reads, in one-letter code: Ribosomal RNA large subunit methyltransferase K/L (707 aa).

The THUMP domain maps to 44–155 (VIYNLCLWSR…NDILTVSFDL (112 aa)).

It belongs to the methyltransferase superfamily. RlmKL family.

It localises to the cytoplasm. The enzyme catalyses guanosine(2445) in 23S rRNA + S-adenosyl-L-methionine = N(2)-methylguanosine(2445) in 23S rRNA + S-adenosyl-L-homocysteine + H(+). The catalysed reaction is guanosine(2069) in 23S rRNA + S-adenosyl-L-methionine = N(2)-methylguanosine(2069) in 23S rRNA + S-adenosyl-L-homocysteine + H(+). In terms of biological role, specifically methylates the guanine in position 2445 (m2G2445) and the guanine in position 2069 (m7G2069) of 23S rRNA. The polypeptide is Ribosomal RNA large subunit methyltransferase K/L (Legionella pneumophila (strain Lens)).